The primary structure comprises 427 residues: Enolase (427 aa).

Residue Gln163 participates in (2R)-2-phosphoglycerate binding. Glu205 (proton donor) is an active-site residue. Asp242, Glu285, and Asp312 together coordinate Mg(2+). (2R)-2-phosphoglycerate-binding residues include Lys337, Arg366, Ser367, and Lys388. Lys337 functions as the Proton acceptor in the catalytic mechanism.

It belongs to the enolase family. Mg(2+) is required as a cofactor.

Its subcellular location is the cytoplasm. The protein resides in the secreted. The protein localises to the cell surface. It catalyses the reaction (2R)-2-phosphoglycerate = phosphoenolpyruvate + H2O. Its pathway is carbohydrate degradation; glycolysis; pyruvate from D-glyceraldehyde 3-phosphate: step 4/5. In terms of biological role, catalyzes the reversible conversion of 2-phosphoglycerate (2-PG) into phosphoenolpyruvate (PEP). It is essential for the degradation of carbohydrates via glycolysis. The protein is Enolase of Nitrobacter hamburgensis (strain DSM 10229 / NCIMB 13809 / X14).